The chain runs to 434 residues: Xylose isomerase (434 aa).

Catalysis depends on residues His99 and Asp102. Mg(2+)-binding residues include Glu230, Glu266, His269, Asp294, Asp305, Asp307, and Asp337.

The protein belongs to the xylose isomerase family. In terms of assembly, homotetramer. It depends on Mg(2+) as a cofactor.

It localises to the cytoplasm. The catalysed reaction is alpha-D-xylose = alpha-D-xylulofuranose. This is Xylose isomerase from Dinoroseobacter shibae (strain DSM 16493 / NCIMB 14021 / DFL 12).